The primary structure comprises 208 residues: Heat shock protein 26 (208 aa).

A phosphoserine mark is found at Ser-44, Ser-52, and Ser-58. Residues 71-179 form the sHSP domain; that stretch reads ANRNDIHWPA…KSKERIIQIQ (109 aa). A disordered region spans residues 187–208; that stretch reads NVKANESEVKGKENGAPNGKDK. Basic and acidic residues predominate over residues 191–208; it reads NESEVKGKENGAPNGKDK.

The protein belongs to the small heat shock protein (HSP20) family.

This is Heat shock protein 26 (Hsp26) from Drosophila melanogaster (Fruit fly).